The primary structure comprises 134 residues: Sec-independent protein translocase protein TatB (134 aa).

Residues 2 to 22 (FDGIGFMELLLIGILGLVVLG) form a helical membrane-spanning segment. Residues 90-134 (AESVNRPYKVEDTSPVAPKASPDESPSVVEAKSSEATSENSSTPK) form a disordered region. Positions 123-134 (SEATSENSSTPK) are enriched in polar residues.

This sequence belongs to the TatB family. As to quaternary structure, the Tat system comprises two distinct complexes: a TatABC complex, containing multiple copies of TatA, TatB and TatC subunits, and a separate TatA complex, containing only TatA subunits. Substrates initially bind to the TatABC complex, which probably triggers association of the separate TatA complex to form the active translocon.

Its subcellular location is the cell inner membrane. In terms of biological role, part of the twin-arginine translocation (Tat) system that transports large folded proteins containing a characteristic twin-arginine motif in their signal peptide across membranes. Together with TatC, TatB is part of a receptor directly interacting with Tat signal peptides. TatB may form an oligomeric binding site that transiently accommodates folded Tat precursor proteins before their translocation. This is Sec-independent protein translocase protein TatB from Shewanella frigidimarina (strain NCIMB 400).